A 366-amino-acid polypeptide reads, in one-letter code: MISSFHRPTVARVNLQAIKENVASVQKHIPLGVKTYAVVKADAYGHGAVQVSKALLPQVDGYCVSNLDEALQLRQAGIDKEILILGVLLPNELELAVANAITVTIASLDWIALARLEKKECQGLKVHVKVDSGMGRIGLRSSKAVNLLIDSLKELGADVEGIFTHFATADEADDTKFNQQLQFFKKLIAGLEDKPRLVHASNSATSIWHSDTIFNAVRLGIVSYGLNPSGSDLSLPFPLQEALSLESSLVHVKMISAGDTVGYGATYTAKKSEYVGTVPIGYADGWTRNMQGFSVLVDGQFCEIIGRVSMDQLTIRLPKAYPLGTKVTLIGSNQQKNISTTDIANYRNTINYEVLCLLSDRIPRIY.

K40 (proton acceptor; specific for D-alanine) is an active-site residue. Residue K40 is modified to N6-(pyridoxal phosphate)lysine. A substrate-binding site is contributed by R136. Y263 (proton acceptor; specific for L-alanine) is an active-site residue. Residue M310 participates in substrate binding.

It belongs to the alanine racemase family. The cofactor is pyridoxal 5'-phosphate.

The enzyme catalyses L-alanine = D-alanine. It functions in the pathway amino-acid biosynthesis; D-alanine biosynthesis; D-alanine from L-alanine: step 1/1. Its function is as follows. Catalyzes the interconversion of L-alanine and D-alanine. May also act on other amino acids. The sequence is that of Alanine racemase (alr) from Streptococcus pyogenes serotype M28 (strain MGAS6180).